The following is a 471-amino-acid chain: Alpha-galactosidase 5 (471 aa).

The N-terminal stretch at 1–18 (MFAFYFLTACTTLKGVFG) is a signal peptide. Cys-42 and Cys-74 form a disulfide bridge. Substrate is bound by residues Asp-72 and Asp-73. An N-linked (GlcNAc...) asparagine glycan is attached at Asn-105. Cys-121 and Cys-151 are oxidised to a cystine. Lys-147 lines the substrate pocket. Asp-149 serves as the catalytic Nucleophile. N-linked (GlcNAc...) asparagine glycosylation occurs at Asn-175. Arg-205 lines the substrate pocket. Asp-209 functions as the Proton donor in the catalytic mechanism. Intrachain disulfides connect Cys-221–Cys-237 and Cys-223–Cys-230. Gln-251 provides a ligand contact to substrate. N-linked (GlcNAc...) asparagine glycans are attached at residues Asn-270, Asn-370, Asn-403, Asn-422, Asn-435, and Asn-454.

This sequence belongs to the glycosyl hydrolase 27 family. Homotetramer.

Its subcellular location is the secreted. It carries out the reaction Hydrolysis of terminal, non-reducing alpha-D-galactose residues in alpha-D-galactosides, including galactose oligosaccharides, galactomannans and galactolipids.. This chain is Alpha-galactosidase 5 (MEL5), found in Saccharomyces cerevisiae (Baker's yeast).